A 292-amino-acid polypeptide reads, in one-letter code: Inositol oxygenase (292 aa).

Substrate is bound by residues Arg-33 and 88 to 90 (DES). Fe cation is bound by residues His-101, His-128, and Asp-129. Residues Lys-132 and 149–150 (GD) each bind substrate. Fe cation is bound by residues His-201, His-227, and Asp-260. Residue 227–228 (HS) participates in substrate binding.

Belongs to the myo-inositol oxygenase family. It depends on Fe cation as a cofactor.

The protein localises to the cytoplasm. It carries out the reaction myo-inositol + O2 = D-glucuronate + H2O + H(+). It functions in the pathway polyol metabolism; myo-inositol degradation into D-glucuronate; D-glucuronate from myo-inositol: step 1/1. The polypeptide is Inositol oxygenase (miox) (Dictyostelium discoideum (Social amoeba)).